The primary structure comprises 243 residues: Trypsin (243 aa).

The N-terminal stretch at 1–15 (MKFLLLCVLLGAAAA) is a signal peptide. Positions 16 to 20 (FDDDK) are cleaved as a propeptide — activation peptide. The region spanning 21-241 (IIGGATCAKS…YNAWIQNTIA (221 aa)) is the Peptidase S1 domain. Cystine bridges form between C27/C157, C45/C61, C129/C230, C136/C203, C168/C182, and C193/C217. Residue H60 is the Charge relay system of the active site. E72, N74, and E82 together coordinate Ca(2+). D104 acts as the Charge relay system in catalysis. S197 acts as the Charge relay system in catalysis.

Belongs to the peptidase S1 family. Ca(2+) is required as a cofactor.

It is found in the secreted. The protein resides in the extracellular space. It carries out the reaction Preferential cleavage: Arg-|-Xaa, Lys-|-Xaa.. In Xenopus laevis (African clawed frog), this protein is Trypsin.